Reading from the N-terminus, the 100-residue chain is Aspartyl/glutamyl-tRNA(Asn/Gln) amidotransferase subunit C (100 aa).

This sequence belongs to the GatC family. As to quaternary structure, heterotrimer of A, B and C subunits.

It carries out the reaction L-glutamyl-tRNA(Gln) + L-glutamine + ATP + H2O = L-glutaminyl-tRNA(Gln) + L-glutamate + ADP + phosphate + H(+). The catalysed reaction is L-aspartyl-tRNA(Asn) + L-glutamine + ATP + H2O = L-asparaginyl-tRNA(Asn) + L-glutamate + ADP + phosphate + 2 H(+). Functionally, allows the formation of correctly charged Asn-tRNA(Asn) or Gln-tRNA(Gln) through the transamidation of misacylated Asp-tRNA(Asn) or Glu-tRNA(Gln) in organisms which lack either or both of asparaginyl-tRNA or glutaminyl-tRNA synthetases. The reaction takes place in the presence of glutamine and ATP through an activated phospho-Asp-tRNA(Asn) or phospho-Glu-tRNA(Gln). In Streptococcus uberis (strain ATCC BAA-854 / 0140J), this protein is Aspartyl/glutamyl-tRNA(Asn/Gln) amidotransferase subunit C.